Here is a 163-residue protein sequence, read N- to C-terminus: EF-hand calcium-binding domain-containing protein 11 (163 aa).

EF-hand domains are found at residues 18–53, 91–126, and 127–162; these read SEHR…LFGY, RYRN…VAPK, and LPER…GQKE. 5 residues coordinate Ca(2+): D140, D142, D144, H146, and D151.

The sequence is that of EF-hand calcium-binding domain-containing protein 11 (EFCAB11) from Homo sapiens (Human).